The chain runs to 693 residues: C6 finger domain transcription factor nscR (693 aa).

The segment at residues 17–43 is a DNA-binding region (zn(2)-C6 fungal-type); that stretch reads CELCRERKVKCDKLDPCTNCSSAGVIC. A disordered region spans residues 589–608; that stretch reads AANTLSVPHTPPSRSSITSS.

Its subcellular location is the nucleus. Its function is as follows. Transcription factor that specifically regulates the neosartoricin B biosynthesis gene cluster. This chain is C6 finger domain transcription factor nscR, found in Trichophyton rubrum (strain ATCC MYA-4607 / CBS 118892) (Athlete's foot fungus).